A 228-amino-acid chain; its full sequence is Glyceraldehyde 3-phosphate phosphatase (228 aa).

This sequence belongs to the HAD-like hydrolase superfamily. It depends on Mg(2+) as a cofactor.

Catalyzes the dephosphorylation of D,L-glyceraldehyde 3-phosphate in vitro. The protein is Glyceraldehyde 3-phosphate phosphatase of Methanocaldococcus jannaschii (strain ATCC 43067 / DSM 2661 / JAL-1 / JCM 10045 / NBRC 100440) (Methanococcus jannaschii).